The primary structure comprises 437 residues: ATP-dependent RNA helicase RhlB (437 aa).

The Q motif signature appears at Gln9–Ala37. A Helicase ATP-binding domain is found at Leu40–Val219. Ala53–Thr60 provides a ligand contact to ATP. Positions Asp165 to Asp168 match the DEAD box motif. In terms of domain architecture, Helicase C-terminal spans Ala245–Ile390. The segment at Ala395–Ser437 is disordered. Over residues Arg403–Gly413 the composition is skewed to low complexity. Basic residues predominate over residues Gly417–Gln428.

Belongs to the DEAD box helicase family. RhlB subfamily. As to quaternary structure, component of the RNA degradosome, which is a multiprotein complex involved in RNA processing and mRNA degradation.

The protein resides in the cytoplasm. The enzyme catalyses ATP + H2O = ADP + phosphate + H(+). In terms of biological role, DEAD-box RNA helicase involved in RNA degradation. Has RNA-dependent ATPase activity and unwinds double-stranded RNA. The protein is ATP-dependent RNA helicase RhlB of Vibrio campbellii (strain ATCC BAA-1116).